We begin with the raw amino-acid sequence, 229 residues long: Flagellar L-ring protein (229 aa).

Residues methionine 1–alanine 23 form the signal peptide. Cysteine 24 is lipidated: N-palmitoyl cysteine. Cysteine 24 carries the S-diacylglycerol cysteine lipid modification.

Belongs to the FlgH family. As to quaternary structure, the basal body constitutes a major portion of the flagellar organelle and consists of four rings (L,P,S, and M) mounted on a central rod.

The protein localises to the cell outer membrane. Its subcellular location is the bacterial flagellum basal body. Its function is as follows. Assembles around the rod to form the L-ring and probably protects the motor/basal body from shearing forces during rotation. This is Flagellar L-ring protein from Anaeromyxobacter dehalogenans (strain 2CP-C).